The primary structure comprises 1082 residues: Protein SPT23 (1082 aa).

3 disordered regions span residues 315–346 (NASN…PQSD), 376–417 (NNNN…FSDI), and 457–476 (ASAR…FMST). The span at 316-328 (ASNTTTPTSTSNA) shows a compositional bias: low complexity. Over residues 329–346 (QVSPMTNDTRSFSSPQSD) the composition is skewed to polar residues. 2 stretches are compositionally biased toward low complexity: residues 376 to 391 (NNNN…KTNT) and 399 to 416 (HFPS…SFSD). At serine 468 the chain carries Phosphoserine. The 78-residue stretch at 508-585 (PSIQRVIPAQ…DPSETSMRNN (78 aa)) folds into the IPT/TIG domain. 2 ANK repeats span residues 709-738 (RGRT…HLND) and 742-771 (FGFT…NIMK).

Functionally, dosage-dependent suppressor of Ty-induced promoter mutations. May exert its suppression effect through protein-protein interactions since does not present any of the motifs generally found in transcriptional activators or DNA binding proteins. This chain is Protein SPT23 (SPT23), found in Saccharomyces cerevisiae (strain ATCC 204508 / S288c) (Baker's yeast).